Here is a 338-residue protein sequence, read N- to C-terminus: Large ribosomal subunit protein uL3 (338 aa).

The interval 1–37 is disordered; sequence MPQPSRPRKGSMGFSPRKRAESEVPRIRSWASNDGAP.

It belongs to the universal ribosomal protein uL3 family. As to quaternary structure, part of the 50S ribosomal subunit. Forms a cluster with proteins L14 and L24e.

Functionally, one of the primary rRNA binding proteins, it binds directly near the 3'-end of the 23S rRNA, where it nucleates assembly of the 50S subunit. The protein is Large ribosomal subunit protein uL3 of Haloquadratum walsbyi (strain DSM 16790 / HBSQ001).